Reading from the N-terminus, the 339-residue chain is Phosphate acyltransferase (339 aa).

The protein belongs to the PlsX family. As to quaternary structure, homodimer. Probably interacts with PlsY.

The protein resides in the cytoplasm. It carries out the reaction a fatty acyl-[ACP] + phosphate = an acyl phosphate + holo-[ACP]. It participates in lipid metabolism; phospholipid metabolism. Its function is as follows. Catalyzes the reversible formation of acyl-phosphate (acyl-PO(4)) from acyl-[acyl-carrier-protein] (acyl-ACP). This enzyme utilizes acyl-ACP as fatty acyl donor, but not acyl-CoA. The polypeptide is Phosphate acyltransferase (Methylococcus capsulatus (strain ATCC 33009 / NCIMB 11132 / Bath)).